The chain runs to 147 residues: Hemoglobin subunit epsilon (147 aa).

Positions 3–147 (HFTAEEKATV…VANALAHKYH (145 aa)) constitute a Globin domain. Residues Ser14 and Ser51 each carry the phosphoserine modification. His64 and His93 together coordinate heme b.

It belongs to the globin family. As to quaternary structure, heterotetramer of two alpha chains and two epsilon chains in early embryonic hemoglobin Gower-2; two zeta chains and two epsilon chains in early embryonic hemoglobin Gower-1. Red blood cells.

The epsilon chain is a beta-type chain of early mammalian embryonic hemoglobin. In Bradypus tridactylus (Pale-throated three-toed sloth), this protein is Hemoglobin subunit epsilon (HBE1).